A 559-amino-acid polypeptide reads, in one-letter code: Polypeptide N-acetylgalactosaminyltransferase 1 (559 aa).

Topologically, residues 1–8 (MRKFAYCK) are cytoplasmic. Residues 9 to 28 (VVLATSLIWVLLDMFLLLYF) form a helical; Signal-anchor for type II membrane protein membrane-spanning segment. Residues 29–559 (SECNKCDEKK…LRNVTLPEIF (531 aa)) lie on the Lumenal side of the membrane. Residues 45-66 (GDVLEPVQKPHEGPGEMGKPVV) are disordered. Residue Asn95 is glycosylated (N-linked (GlcNAc...) asparagine). Intrachain disulfides connect Cys106/Cys339, Cys330/Cys408, Cys442/Cys459, Cys482/Cys497, and Cys523/Cys540. The tract at residues 115–225 (LPTTSVVIVF…VGWLEPLLAR (111 aa)) is catalytic subdomain A. Residues Asp156 and Arg186 each coordinate substrate. 2 residues coordinate Mn(2+): Asp209 and His211. Residues 285–347 (PVRTPTMAGG…TCSHVGHVFR (63 aa)) form a catalytic subdomain B region. Substrate is bound at residue Trp316. His344 lines the Mn(2+) pocket. Arg347 and Tyr352 together coordinate substrate. Residues 429 to 551 (SSLGEIRNVE…GSRSQQWLLR (123 aa)) form the Ricin B-type lectin domain. Asn552 is a glycosylation site (N-linked (GlcNAc...) asparagine).

It belongs to the glycosyltransferase 2 family. GalNAc-T subfamily. The cofactor is Mn(2+).

The protein localises to the golgi apparatus. Its subcellular location is the golgi stack membrane. The protein resides in the secreted. The enzyme catalyses L-seryl-[protein] + UDP-N-acetyl-alpha-D-galactosamine = a 3-O-[N-acetyl-alpha-D-galactosaminyl]-L-seryl-[protein] + UDP + H(+). The catalysed reaction is L-threonyl-[protein] + UDP-N-acetyl-alpha-D-galactosamine = a 3-O-[N-acetyl-alpha-D-galactosaminyl]-L-threonyl-[protein] + UDP + H(+). The protein operates within protein modification; protein glycosylation. Functionally, catalyzes the initial reaction in O-linked oligosaccharide biosynthesis, the transfer of an N-acetyl-D-galactosamine residue to a serine or threonine residue on the protein receptor. Has a broad spectrum of substrates such as apomucin-, MUC5AC-, MUC1- and MUC2-derived peptides. This Sus scrofa (Pig) protein is Polypeptide N-acetylgalactosaminyltransferase 1.